We begin with the raw amino-acid sequence, 454 residues long: MASKCLKASFSSGSLKVPGGAGGGSARVSTIFSSSSCKLPSFSRGPRSFSACSVGLGKSSCRAASCLPALCLPSGGFATSYSMAGGWFGEGILTGNEKETMQFLNDRLASYLEKCGSWSGRTRSWRAASTSGVSNSALPVPDYQSYFQTIEELQKKTLCTKSENARLVVQIDNAKLAADDFRTKYETEVSMRQLVESDMNGLRRILDDLTLCKADLEAQVESLKEELLCLKKNHEEEVNSLRCQLGDRLNVEVDAAPPVDLNRVLNEMRCQYETLVENNRREAEDWFNTQTEELNQQVVSSSEQLQSYQAEIIELRRTVNALEIELQAQHSMRDALESTLAETEARYSSQLAQMQGLIGNVESQLAEIRCDLERQNQEYQVLLDVRARLECEINTYRGLLDSEDCKLPCNPCAPDHSPSKSCLPCLPAASCGPGMARTTCSPRPICVPCPGSRF.

Positions 1–97 are head; it reads MASKCLKASF…FGEGILTGNE (97 aa). The 311-residue stretch at 97–407 folds into the IF rod domain; that stretch reads EKETMQFLND…GLLDSEDCKL (311 aa). The coil 1A stretch occupies residues 98-125; it reads KETMQFLNDRLASYLEKCGSWSGRTRSW. Residues 134-142 are linker 1; the sequence is SNSALPVPD. A coil 1B region spans residues 143–243; it reads YQSYFQTIEE…HEEEVNSLRC (101 aa). The segment at 244-259 is linker 12; it reads QLGDRLNVEVDAAPPV. The tract at residues 260-403 is coil 2; the sequence is DLNRVLNEMR…NTYRGLLDSE (144 aa). Residues 404–454 are tail; it reads DCKLPCNPCAPDHSPSKSCLPCLPAASCGPGMARTTCSPRPICVPCPGSRF.

This sequence belongs to the intermediate filament family.

In Bos taurus (Bovine), this protein is Keratin, type I cuticular Ha5.